The chain runs to 88 residues: U-scoloptoxin(XY)-Er1b (88 aa).

The signal sequence occupies residues 1 to 24; it reads MASQVVLSFALVVVLAVFVGQVDS. The segment at 66 to 88 is disordered; that stretch reads RPELSPGALDDSSEEKDNEASLA. Residues 79–88 constitute a propeptide that is removed on maturation; that stretch reads EEKDNEASLA.

This sequence belongs to the scoloptoxin-XY family. In terms of processing, contains 3 disulfide bonds. As to expression, expressed by the venom gland.

It is found in the secreted. The sequence is that of U-scoloptoxin(XY)-Er1b from Ethmostigmus rubripes (Giant centipede).